A 270-amino-acid polypeptide reads, in one-letter code: Phospholipase A and acyltransferase 5 (270 aa).

Disordered stretches follow at residues 1 to 54 (MGLS…SASS) and 70 to 122 (RRLE…NPRP). Composition is skewed to polar residues over residues 24–54 (TQIS…SASS) and 100–116 (IPTS…NQAV). The LRAT domain maps to 127 to 240 (LIEIFRIGYE…LRYGVPRSQQ (114 aa)). Catalysis depends on residues His137 and His149. Catalysis depends on Cys224, which acts as the Acyl-thioester intermediate.

The protein belongs to the H-rev107 family. In terms of tissue distribution, isoform 4 shows highest expression level in testis.

The protein resides in the cytoplasm. The protein localises to the cytosol. The enzyme catalyses a 1,2-diacyl-sn-glycero-3-phosphocholine + H2O = a 1-acyl-sn-glycero-3-phosphocholine + a fatty acid + H(+). It carries out the reaction a 1,2-diacyl-sn-glycero-3-phosphocholine + H2O = a 2-acyl-sn-glycero-3-phosphocholine + a fatty acid + H(+). The catalysed reaction is 1-hexadecanoyl-2-(5Z,8Z,11Z,14Z-eicosatetraenoyl)-sn-glycero-3-phosphocholine + 1,2-di-(9Z-octadecenoyl)-sn-glycero-3-phosphoethanolamine = N-(5Z,8Z,11Z,14Z-eicosatetraenoyl)-1,2-di-(9Z-octadecenoyl)-sn-glycero-3-phosphoethanolamine + 1-hexadecanoyl-sn-glycero-3-phosphocholine + H(+). It catalyses the reaction 1,2-di-(9Z-octadecenoyl)-sn-glycero-3-phosphoethanolamine + 1,2-dihexadecanoyl-sn-glycero-3-phosphocholine = N-hexadecanoyl-1,2-di-(9Z-octadecenoyl)-sn-glycero-3-phosphoethanolamine + 1-hexadecanoyl-sn-glycero-3-phosphocholine + H(+). The enzyme catalyses 1,2-di-(9Z-octadecenoyl)-sn-glycero-3-phosphoethanolamine + 1,2-dihexadecanoyl-sn-glycero-3-phosphocholine = N-hexadecanoyl-1,2-di-(9Z-octadecenoyl)-sn-glycero-3-phosphoethanolamine + 2-hexadecanoyl-sn-glycero-3-phosphocholine + H(+). It carries out the reaction a 1,2-diacyl-sn-glycero-3-phosphoethanolamine + a 1,2-diacyl-sn-glycero-3-phosphocholine = an N-acyl-1,2-diacyl-sn-glycero-3-phosphoethanolamine + a 1-acyl-sn-glycero-3-phosphocholine + H(+). The catalysed reaction is a 1,2-diacyl-sn-glycero-3-phosphoethanolamine + a 1,2-diacyl-sn-glycero-3-phosphocholine = an N-acyl-1,2-diacyl-sn-glycero-3-phosphoethanolamine + a 2-acyl-sn-glycero-3-phosphocholine + H(+). It catalyses the reaction 1-hexadecanoyl-2-(9Z-octadecenoyl)-sn-glycero-3-phosphocholine + 1,2-di-(9Z-octadecenoyl)-sn-glycero-3-phosphoethanolamine = N,1,2-tri-(9Z-octadecenoyl)-sn-glycero-3-phosphoethanolamine + 1-hexadecanoyl-sn-glycero-3-phosphocholine + H(+). Exhibits both phospholipase A1/2 and acyltransferase activities. Shows phospholipase A1 (PLA1) and A2 (PLA2) activity, catalyzing the calcium-independent release of fatty acids from the sn-1 or sn-2 position of glycerophospholipids. Shows N-acyltransferase activity, catalyzing the calcium-independent transfer of a fatty acyl group at the sn-1 position of phosphatidylcholine (PC) and other glycerophospholipids to the primary amine of phosphatidylethanolamine (PE), forming N-acylphosphatidylethanolamine (NAPE), which serves as precursor for N-acylethanolamines (NAEs). In Mus musculus (Mouse), this protein is Phospholipase A and acyltransferase 5.